The chain runs to 1818 residues: U3 small nucleolar RNA-associated protein 10 (1818 aa).

The helical transmembrane segment at 568–588 (TDFYLLIPLILLALFDNSKLI) threads the bilayer. The stretch at 1778-1816 (LVPYIAELLEDDDEEVEMEVRRGLVRVIENVLGEPLDRY) is one HEAT repeat.

The protein belongs to the HEATR1/UTP10 family. Component of the ribosomal small subunit (SSU) processome.

The protein resides in the nucleus. Its subcellular location is the nucleolus. It is found in the membrane. In terms of biological role, involved in nucleolar processing of pre-18S ribosomal RNA. Involved in ribosome biosynthesis. This chain is U3 small nucleolar RNA-associated protein 10, found in Candida albicans (strain SC5314 / ATCC MYA-2876) (Yeast).